Consider the following 491-residue polypeptide: Glutamyl-tRNA(Gln) amidotransferase subunit A (491 aa).

Catalysis depends on serine 158, which acts as the Charge relay system. Serine 182 acts as the Acyl-ester intermediate in catalysis.

It belongs to the amidase family. GatA subfamily. In terms of assembly, heterotrimer of A, B and C subunits.

It catalyses the reaction L-glutamyl-tRNA(Gln) + L-glutamine + ATP + H2O = L-glutaminyl-tRNA(Gln) + L-glutamate + ADP + phosphate + H(+). In terms of biological role, allows the formation of correctly charged Gln-tRNA(Gln) through the transamidation of misacylated Glu-tRNA(Gln) in organisms which lack glutaminyl-tRNA synthetase. The reaction takes place in the presence of glutamine and ATP through an activated gamma-phospho-Glu-tRNA(Gln). This Bradyrhizobium diazoefficiens (strain JCM 10833 / BCRC 13528 / IAM 13628 / NBRC 14792 / USDA 110) protein is Glutamyl-tRNA(Gln) amidotransferase subunit A.